Consider the following 145-residue polypeptide: D-aminoacyl-tRNA deacylase (145 aa).

The Gly-cisPro motif, important for rejection of L-amino acids motif lies at 137–138; that stretch reads GP.

Belongs to the DTD family. As to quaternary structure, homodimer.

It localises to the cytoplasm. The catalysed reaction is glycyl-tRNA(Ala) + H2O = tRNA(Ala) + glycine + H(+). It carries out the reaction a D-aminoacyl-tRNA + H2O = a tRNA + a D-alpha-amino acid + H(+). Its function is as follows. An aminoacyl-tRNA editing enzyme that deacylates mischarged D-aminoacyl-tRNAs. Also deacylates mischarged glycyl-tRNA(Ala), protecting cells against glycine mischarging by AlaRS. Acts via tRNA-based rather than protein-based catalysis; rejects L-amino acids rather than detecting D-amino acids in the active site. By recycling D-aminoacyl-tRNA to D-amino acids and free tRNA molecules, this enzyme counteracts the toxicity associated with the formation of D-aminoacyl-tRNA entities in vivo and helps enforce protein L-homochirality. The sequence is that of D-aminoacyl-tRNA deacylase from Rhodopirellula baltica (strain DSM 10527 / NCIMB 13988 / SH1).